The primary structure comprises 69 residues: Protein SlyX homolog (69 aa).

The protein belongs to the SlyX family.

This chain is Protein SlyX homolog, found in Pseudomonas aeruginosa (strain LESB58).